A 224-amino-acid chain; its full sequence is MRYPVDVYTGKIQAYPEGKPSAIAKIQVDGELMLTELGLEGDEQAEKKVHGGPDRALCHYPREHYLYWAREFPEQAELFVAPAFGENLSTDGLTESNVYMGDIFRWGEALIQVSQPRSPCYKLNYHFDISDIAQLMQNTGKVGWLYSVIAPGKVSADAPLELVSRVSDVTVQEAAAIAWHMPFDDDQYHRLLSAAGLSKSWTRTMQKRRLSGKIEDFSRRLWGK.

The 138-residue stretch at 26–163 (IQVDGELMLT…VSADAPLELV (138 aa)) folds into the MOSC domain.

In terms of assembly, monomer.

This is Protein YiiM (yiiM) from Escherichia coli (strain K12).